The primary structure comprises 149 residues: Transcriptional repressor NrdR (149 aa).

A zinc finger lies at cysteine 3–cysteine 34. Residues proline 49–glutamate 139 enclose the ATP-cone domain.

Belongs to the NrdR family. The cofactor is Zn(2+).

Its function is as follows. Negatively regulates transcription of bacterial ribonucleotide reductase nrd genes and operons by binding to NrdR-boxes. The chain is Transcriptional repressor NrdR from Shewanella piezotolerans (strain WP3 / JCM 13877).